Here is a 726-residue protein sequence, read N- to C-terminus: L-lysine 6-oxidase (726 aa).

Positions 516-581 (CTIQTVNFSE…LPPAYYSYWW (66 aa)) form a cross-link, 4'-cysteinyl-tryptophylquinone (Cys-Trp). W581 is modified (tryptophylquinone).

As to quaternary structure, homotetramer. Cysteine tryptophylquinone residue serves as cofactor. In terms of processing, the cysteine tryptophylquinone (CTQ) is generated by oxidation of the indole ring of a tryptophan residue to form tryptophylquinone, followed by covalent cross-linking with a cysteine residue.

The protein resides in the secreted. It catalyses the reaction L-lysine + O2 + H2O = (S)-2-amino-6-oxohexanoate + H2O2 + NH4(+). Inhibited by aminoguanidine, amiloride and beta-aminopropionitrile. In terms of biological role, has antibacterial activity against a wide spectrum of Gram-positive and Gram-negative bacteria including nosocomial isolates of S.aureus and Pseudomonas sp. The antimicrobial activity is due to hydrogen peroxide generated by its lysine oxidase activity. Also has autotoxic activity. Involved in biofilm differentiation; responsible for cell death within microcolonies during biofilm development which is linked to the generation of a phenotypically diverse dispersal population and thus may play a role in colonization. The polypeptide is L-lysine 6-oxidase (lodA) (Marinomonas mediterranea (strain ATCC 700492 / JCM 21426 / NBRC 103028 / MMB-1)).